The primary structure comprises 359 residues: Putative cyclin-F1-2 (359 aa).

This sequence belongs to the cyclin family. Cyclin F subfamily.

The sequence is that of Putative cyclin-F1-2 (CYCF1-2) from Oryza sativa subsp. japonica (Rice).